A 1902-amino-acid polypeptide reads, in one-letter code: PI-type proteinase (1902 aa).

The N-terminal stretch at 1 to 33 is a signal peptide; the sequence is MQRKKKGLSILLAGTVALGALAVLPVGEIQAKA. Residues 34–187 constitute a propeptide that is removed on maturation; that stretch reads AISQQTKGSS…VTLAKVYYPT (154 aa). Residues 191-697 enclose the Peptidase S8 domain; it reads ANSMANVQAV…AGLVDVKAAI (507 aa). Active-site charge relay system residues include D217, H281, and S620. The interval 1796–1874 is disordered; that stretch reads GKGDGTTGTS…GALPKTGETT (79 aa). The segment covering 1797–1812 has biased composition (gly residues); it reads KGDGTTGTSDKGGGQG. A compositionally biased stretch (polar residues) spans 1830–1843; the sequence is SQPSSGGNIPTNPA. An LPXTG sorting signal motif is present at residues 1867–1871; the sequence is LPKTG. A Pentaglycyl murein peptidoglycan amidated threonine modification is found at T1870. A propeptide spans 1871-1902 (removed by sortase); that stretch reads GETTERPAFGFLGVIVVILMGVLGLKRKQREE.

Belongs to the peptidase S8 family.

It is found in the secreted. Its subcellular location is the cell wall. It catalyses the reaction Endopeptidase activity with very broad specificity, although some subsite preference have been noted, e.g. large hydrophobic residues in the P1 and P4 positions, and Pro in the P2 position. Best known for its action on caseins, although it has been shown to hydrolyze hemoglobin and oxidized insulin B-chain.. Protease which breaks down milk proteins during the growth of the bacteria on milk. This chain is PI-type proteinase (prtP), found in Lactococcus lactis subsp. cremoris (Streptococcus cremoris).